The primary structure comprises 155 residues: Mediator of RNA polymerase II transcription subunit 21 (155 aa).

A disordered region spans residues 29-73; it reads QAPPSVPPGQHRVDTMPEIKGKAASENPQSNPPQPAEPPVPEKIS. The span at 39–51 shows a compositional bias: basic and acidic residues; the sequence is HRVDTMPEIKGKA. Residues 58-69 show a composition bias toward pro residues; the sequence is SNPPQPAEPPVP. Residues 75–147 adopt a coiled-coil conformation; sequence EQFNQDLKEF…EVLLKKVEDK (73 aa).

This sequence belongs to the Mediator complex subunit 21 family. Component of the Mediator complex.

It localises to the nucleus. Functionally, component of the Mediator complex, a coactivator involved in the regulated transcription of nearly all RNA polymerase II-dependent genes. Mediator functions as a bridge to convey information from gene-specific regulatory proteins to the basal RNA polymerase II transcription machinery. Mediator is recruited to promoters by direct interactions with regulatory proteins and serves as a scaffold for the assembly of a functional preinitiation complex with RNA polymerase II and the general transcription factors. This chain is Mediator of RNA polymerase II transcription subunit 21 (SRB7), found in Phaeosphaeria nodorum (strain SN15 / ATCC MYA-4574 / FGSC 10173) (Glume blotch fungus).